Consider the following 178-residue polypeptide: Inner membrane-spanning protein YciB (178 aa).

5 consecutive transmembrane segments (helical) span residues 10-30 (IVLFFGSYKLYGIYVATAVLM), 47-67 (LQTMHKVTLALILSFGALTLA), 76-96 (WKPTVLYGAMSVALALTLWAL), 121-141 (WAWIAYCAFMSAINAYVVLHW), and 151-171 (LWGYVFPLVFLIGQGLYIAPH).

It belongs to the YciB family.

It localises to the cell inner membrane. In terms of biological role, plays a role in cell envelope biogenesis, maintenance of cell envelope integrity and membrane homeostasis. The chain is Inner membrane-spanning protein YciB from Verminephrobacter eiseniae (strain EF01-2).